The primary structure comprises 166 residues: Protein phosphatase 1 regulatory subunit 1A (166 aa).

Position 1 is an N-acetylmethionine (Met1). Residues 1–166 (MEQDNSPRKI…SQDSQGASAV (166 aa)) form a disordered region. Residues 9–12 (KIQF) are essential for activity. Residues 19-29 (PHLDPEAAEQI) show a composition bias toward basic and acidic residues. Thr35 is modified (phosphothreonine; by PKA). Positions 42–54 (TSDQSSPEVDEDR) are essential for activity. Phosphoserine is present on residues Ser43, Ser46, Ser47, and Ser67. Positions 104 to 114 (AAEGTGAQESQ) are enriched in low complexity. The segment covering 143–152 (AQERRGEEPS) has biased composition (basic and acidic residues). The interval 143 to 166 (AQERRGEEPSTAKTSQDSQGASAV) is interaction with PPP1R15A. Positions 153–166 (TAKTSQDSQGASAV) are enriched in polar residues.

The protein belongs to the protein phosphatase inhibitor 1 family. As to quaternary structure, interacts with PPP1R15A. Post-translationally, phosphorylation of Thr-35 is required for activity.

In terms of biological role, inhibitor of protein-phosphatase 1. This protein may be important in hormonal control of glycogen metabolism. Hormones that elevate intracellular cAMP increase I-1 activity in many tissues. I-1 activation may impose cAMP control over proteins that are not directly phosphorylated by PKA. Following a rise in intracellular calcium, I-1 is inactivated by calcineurin (or PP2B). Does not inhibit type-2 phosphatases. In Oryctolagus cuniculus (Rabbit), this protein is Protein phosphatase 1 regulatory subunit 1A (PPP1R1A).